The primary structure comprises 175 residues: Flagellar assembly factor FliW (175 aa).

The protein belongs to the FliW family. As to quaternary structure, interacts with translational regulator CsrA and flagellin(s).

The protein localises to the cytoplasm. In terms of biological role, acts as an anti-CsrA protein, binds CsrA and prevents it from repressing translation of its target genes, one of which is flagellin. Binds to flagellin and participates in the assembly of the flagellum. The sequence is that of Flagellar assembly factor FliW from Bdellovibrio bacteriovorus (strain ATCC 15356 / DSM 50701 / NCIMB 9529 / HD100).